A 527-amino-acid chain; its full sequence is Glutamate--cysteine ligase (527 aa).

This sequence belongs to the glutamate--cysteine ligase type 1 family. Type 1 subfamily.

It carries out the reaction L-cysteine + L-glutamate + ATP = gamma-L-glutamyl-L-cysteine + ADP + phosphate + H(+). It participates in sulfur metabolism; glutathione biosynthesis; glutathione from L-cysteine and L-glutamate: step 1/2. This Bordetella parapertussis (strain 12822 / ATCC BAA-587 / NCTC 13253) protein is Glutamate--cysteine ligase.